The primary structure comprises 1049 residues: GPI inositol-deacylase (1049 aa).

Residues 39–59 (ACSAYTLVTTALGFAAFFLML) traverse the membrane as a helical segment. The active site involves S222. Transmembrane regions (helical) follow at residues 699–719 (LWMR…ALVL), 742–762 (CMYS…ITLA), 798–818 (PFFW…CVMV), 867–887 (ILLS…VLCI), 917–937 (SIFI…VVWI), 944–964 (WLTP…ILLV), 986–1006 (VFLF…AYVL), and 1009–1029 (LANI…GLAF).

Belongs to the GPI inositol-deacylase family.

It localises to the endoplasmic reticulum membrane. Functionally, involved in inositol deacylation of GPI-anchored proteins which plays important roles in the quality control and ER-associated degradation of GPI-anchored proteins. The protein is GPI inositol-deacylase (BST1) of Phaeosphaeria nodorum (strain SN15 / ATCC MYA-4574 / FGSC 10173) (Glume blotch fungus).